Here is an 82-residue protein sequence, read N- to C-terminus: Small ribosomal subunit protein eS17 (82 aa).

Belongs to the eukaryotic ribosomal protein eS17 family.

In Sulfolobus acidocaldarius (strain ATCC 33909 / DSM 639 / JCM 8929 / NBRC 15157 / NCIMB 11770), this protein is Small ribosomal subunit protein eS17.